The sequence spans 585 residues: Rab GTPase-binding effector protein 2 (585 aa).

Ala2 carries the N-acetylalanine modification. Residues 27 to 183 adopt a coiled-coil conformation; the sequence is QEGAKVEAES…ELIQEIQRRP (157 aa). 3 disordered regions span residues 178 to 265, 381 to 408, and 491 to 515; these read EIQR…ASLV, ENQG…EESL, and EEQS…EEAQ. Residues Ser188, Ser192, Ser198, and Ser202 each carry the phosphoserine modification. Positions 288–540 form a coiled coil; sequence NQWEQLQLEG…QAELETSEQV (253 aa). A compositionally biased stretch (basic and acidic residues) spans 491-501; that stretch reads EEQSKAKRQEV.

The protein belongs to the rabaptin family. Heterodimer with RABGEF1. The dimer binds RAB5A that has been activated by GTP-binding. Interacts with SDCCAG8; this interaction is important for ciliogenesis regulation. Interacts with RAB4; this interaction may mediate VEGFR2 cell surface expression.

The protein resides in the cytoplasm. Its subcellular location is the early endosome. It is found in the cytoskeleton. It localises to the microtubule organizing center. The protein localises to the centrosome. The protein resides in the cilium basal body. Plays a role in membrane trafficking and in homotypic early endosome fusion. Participates in arteriogenesis by regulating vascular endothelial growth factor receptor 2/VEGFR2 cell surface expression and endosomal trafficking. By interacting with SDCCAG8, localizes to centrosomes and plays a critical role in ciliogenesis. The chain is Rab GTPase-binding effector protein 2 (RABEP2) from Bos taurus (Bovine).